Consider the following 405-residue polypeptide: Pleckstrin homology-like domain family A member 1 (405 aa).

Basic and acidic residues-rich tracts occupy residues 1-11 and 54-63; these read MRRTPAAERLS and RSPEDGREQP. 3 disordered regions span residues 1-67, 189-217, and 293-405; these read MRRT…AHGS, QLQQ…VASL, and QQHL…SNSA. Residues 153 to 277 form the PH domain; sequence ALKEGVLEKR…AEITLQMVQY (125 aa). The segment covering 189 to 202 has biased composition (low complexity); that stretch reads QLQQQQQQQQPGQG. The span at 204 to 213 shows a compositional bias: polar residues; it reads AEPSQPSGPT. Residues 294 to 309 show a composition bias toward low complexity; the sequence is QHLVQQQPPQTQQIQP. Positions 309-344 are 16 X 2 AA repeats of P-Q; it reads PQPQPQIQPQPQPQIQPQPQPQPQPQPQPQPQPQPQ. Positions 310 to 342 are enriched in pro residues; the sequence is QPQPQIQPQPQPQIQPQPQPQPQPQPQPQPQPQ. Residues 350 to 376 are compositionally biased toward basic residues; that stretch reads PHPHPHPYSHPHQHPHPHPHPHPHPHP. An 11 X 2 AA repeats of P-H region spans residues 354–377; that stretch reads PHPYSHPHQHPHPHPHPHPHPHPH. The segment covering 378 to 389 has biased composition (low complexity); that stretch reads PYQLQHAHQPLH.

In terms of assembly, interacts with RPL14, EIF3S7 and PABPC4. In terms of tissue distribution, widely expressed with very high levels in adult liver and high levels in adult lung. According to PubMed:10428057 expressed at low levels in liver. Expressed at increased levels in atherosclerotic lesions observed in hyperhomocysteinema.

It localises to the cytoplasm. The protein resides in the cytoplasmic vesicle. The protein localises to the nucleus. It is found in the nucleolus. In terms of biological role, seems to be involved in regulation of apoptosis. May be involved in detachment-mediated programmed cell death. May mediate apoptosis during neuronal development. May be involved in regulation of anti-apoptotic effects of IGF1. Required for TCR-induced apoptosis and expression of TNFRSF6/FAS in a T-cell hybridoma cell line. May be involved in translational regulation. This is Pleckstrin homology-like domain family A member 1 (Phlda1) from Mus musculus (Mouse).